We begin with the raw amino-acid sequence, 387 residues long: Protein BTN1 (387 aa).

An N-terminal signal peptide occupies residues M1–A31. 10 consecutive transmembrane segments (helical) span residues I43–V63, I72–W92, L93–L113, S129–F149, L151–Y171, T225–I245, Y257–H276, L278–L298, S308–V328, and L347–I367.

It belongs to the battenin family.

The protein localises to the vacuole membrane. Its function is as follows. Involved in vacuolar transport and vacuole pH homeostasis. Also required for cytokinesis. The chain is Protein BTN1 (BTN1) from Kluyveromyces lactis (strain ATCC 8585 / CBS 2359 / DSM 70799 / NBRC 1267 / NRRL Y-1140 / WM37) (Yeast).